A 181-amino-acid polypeptide reads, in one-letter code: Ribosome maturation factor RimM (181 aa).

The 80-residue stretch at 98-177 (EGEFFYCDLI…KITTHNAKTL (80 aa)) folds into the PRC barrel domain.

Belongs to the RimM family. In terms of assembly, binds ribosomal protein uS19.

It is found in the cytoplasm. Functionally, an accessory protein needed during the final step in the assembly of 30S ribosomal subunit, possibly for assembly of the head region. Essential for efficient processing of 16S rRNA. May be needed both before and after RbfA during the maturation of 16S rRNA. It has affinity for free ribosomal 30S subunits but not for 70S ribosomes. The sequence is that of Ribosome maturation factor RimM from Helicobacter pylori (strain J99 / ATCC 700824) (Campylobacter pylori J99).